A 291-amino-acid polypeptide reads, in one-letter code: Ribosomal RNA small subunit methyltransferase A (291 aa).

Histidine 37, leucine 39, glycine 64, glutamate 85, aspartate 110, and asparagine 131 together coordinate S-adenosyl-L-methionine.

It belongs to the class I-like SAM-binding methyltransferase superfamily. rRNA adenine N(6)-methyltransferase family. RsmA subfamily.

Its subcellular location is the cytoplasm. It catalyses the reaction adenosine(1518)/adenosine(1519) in 16S rRNA + 4 S-adenosyl-L-methionine = N(6)-dimethyladenosine(1518)/N(6)-dimethyladenosine(1519) in 16S rRNA + 4 S-adenosyl-L-homocysteine + 4 H(+). Specifically dimethylates two adjacent adenosines (A1518 and A1519) in the loop of a conserved hairpin near the 3'-end of 16S rRNA in the 30S particle. May play a critical role in biogenesis of 30S subunits. The polypeptide is Ribosomal RNA small subunit methyltransferase A (Dehalococcoides mccartyi (strain ATCC BAA-2266 / KCTC 15142 / 195) (Dehalococcoides ethenogenes (strain 195))).